A 481-amino-acid chain; its full sequence is Abietadienol/abietadienal oxidase (481 aa).

The chain crosses the membrane as a helical span at residues 2–22 (ADQISLLLVVFTAAVALLHLI). Residue Cys430 coordinates heme.

The protein belongs to the cytochrome P450 family. It depends on heme as a cofactor. As to expression, expressed in young tissues such as flushing buds and green bark tissues. Lower levels in mature needles and bark.

It is found in the membrane. The catalysed reaction is abieta-7,13-dien-18-ol + 2 reduced [NADPH--hemoprotein reductase] + 2 O2 = abieta-7,13-dien-18-oate + 2 oxidized [NADPH--hemoprotein reductase] + 3 H2O + 3 H(+). Multifunctional and multisubstrate cytochrome P450 that oxidizes the respective carbon 18 of abietadienol, abietadienal, levopimaradienol, isopimara-7,15-dienol, isopimara-7,15-dienal, dehydroabietadienol, and dehydroabietadienal. This is Abietadienol/abietadienal oxidase (CYP720B1) from Pinus taeda (Loblolly pine).